A 590-amino-acid polypeptide reads, in one-letter code: Protein NRT1/ PTR FAMILY 6.4 (590 aa).

The interval 1-24 is disordered; it reads MVHVSSSHGAKDGSEEAYDYRGNP. 12 helical membrane-spanning segments follow: residues 48-68, 73-93, 104-124, 147-167, 197-217, 222-242, 332-352, 371-391, 419-439, 453-473, 492-512, and 533-553; these read ICVM…LHIS, ATIV…GGFL, VAIS…ATTI, GHQL…GGGI, FYFS…YVQD, GWGY…LLCG, VKLV…WTIY, GSFT…ILLF, IGVG…IENA, AFWL…AYVG, GLFL…VSLV, and FYWL…VFAM.

Belongs to the major facilitator superfamily. Proton-dependent oligopeptide transporter (POT/PTR) (TC 2.A.17) family. As to expression, expressed in leaves, flowers and siliques. Detected in leaves.

It localises to the membrane. Its function is as follows. Low-affinity nitrate transporter. The protein is Protein NRT1/ PTR FAMILY 6.4 (NPF6.4) of Arabidopsis thaliana (Mouse-ear cress).